Reading from the N-terminus, the 179-residue chain is Large ribosomal subunit protein uL6 (179 aa).

Belongs to the universal ribosomal protein uL6 family. In terms of assembly, part of the 50S ribosomal subunit.

This protein binds to the 23S rRNA, and is important in its secondary structure. It is located near the subunit interface in the base of the L7/L12 stalk, and near the tRNA binding site of the peptidyltransferase center. The sequence is that of Large ribosomal subunit protein uL6 from Chlorobium phaeovibrioides (strain DSM 265 / 1930) (Prosthecochloris vibrioformis (strain DSM 265)).